The primary structure comprises 314 residues: 2,3,4,5-tetrahydropyridine-2,6-dicarboxylate N-succinyltransferase (314 aa).

Mg(2+)-binding residues include Asp163 and Glu180. Residue Glu196 is the Acyl-anhydride intermediate of the active site. Succinyl-CoA contacts are provided by residues Arg198, Gly213, Ser216, Ala239, 254–255 (EA), Gly262, Lys274, and 287–290 (RRNS).

The protein belongs to the type 2 tetrahydrodipicolinate N-succinyltransferase family. As to quaternary structure, homotrimer.

The protein localises to the cytoplasm. The catalysed reaction is (S)-2,3,4,5-tetrahydrodipicolinate + succinyl-CoA + H2O = (S)-2-succinylamino-6-oxoheptanedioate + CoA. It participates in amino-acid biosynthesis; L-lysine biosynthesis via DAP pathway; LL-2,6-diaminopimelate from (S)-tetrahydrodipicolinate (succinylase route): step 1/3. Functionally, catalyzes the conversion of the cyclic tetrahydrodipicolinate (THDP) into the acyclic N-succinyl-L-2-amino-6-oxopimelate using succinyl-CoA. The protein is 2,3,4,5-tetrahydropyridine-2,6-dicarboxylate N-succinyltransferase of Mycolicibacterium smegmatis (strain ATCC 700084 / mc(2)155) (Mycobacterium smegmatis).